The following is a 98-amino-acid chain: Lipolysis-activating peptide 1-alpha chain (98 aa).

The N-terminal stretch at 1 to 22 (MMKLVLFGIIVILFSMIGSIHG) is a signal peptide. The region spanning 26-89 (PGNYPLNTYG…IWDAVKRHCK (64 aa)) is the LCN-type CS-alpha/beta domain. Cystine bridges form between Cys-40–Cys-63, Cys-49–Cys-68, and Cys-53–Cys-70. A Lysine amide modification is found at Lys-96.

The protein belongs to the long (3 C-C) scorpion toxin superfamily. Monomer (edited version) and heterodimer (non-edited version) of this alpha chain and a beta chain (AC B8XGZ8). Expressed by the venom gland.

Its subcellular location is the secreted. Functionally, the heterodimer non-edited LVP1 induces lipolysis in rat adipocytes. Induction of lipolysis by LVP1 appears to be mediated through the beta-2 adrenergic receptor pathway (ADRB2). In terms of biological role, the edited BmKBTx-like, similar to beta-toxins, may modulate voltage-gated sodium channels (Nav) and may block voltage-gated potassium channels (Kv). The protein is Lipolysis-activating peptide 1-alpha chain of Buthus israelis (Israeli scorpion).